The primary structure comprises 342 residues: Uroporphyrinogen decarboxylase (342 aa).

Substrate-binding positions include 22 to 26 (RQAGR), phenylalanine 41, aspartate 72, tyrosine 146, serine 201, and histidine 317.

This sequence belongs to the uroporphyrinogen decarboxylase family. Homodimer.

It localises to the cytoplasm. It catalyses the reaction uroporphyrinogen III + 4 H(+) = coproporphyrinogen III + 4 CO2. It participates in porphyrin-containing compound metabolism; protoporphyrin-IX biosynthesis; coproporphyrinogen-III from 5-aminolevulinate: step 4/4. Catalyzes the decarboxylation of four acetate groups of uroporphyrinogen-III to yield coproporphyrinogen-III. The protein is Uroporphyrinogen decarboxylase of Orientia tsutsugamushi (strain Boryong) (Rickettsia tsutsugamushi).